A 277-amino-acid chain; its full sequence is Formamidopyrimidine-DNA glycosylase (277 aa).

Pro-2 (schiff-base intermediate with DNA) is an active-site residue. The active-site Proton donor is the Glu-3. The active-site Proton donor; for beta-elimination activity is the Lys-58. The DNA site is built by His-97, Arg-116, and Arg-158. The segment at 243 to 277 (NVYGRAGAPCPRCGRSIRQRRIAQRSTWYCPGCQR) adopts an FPG-type zinc-finger fold. Arg-267 acts as the Proton donor; for delta-elimination activity in catalysis.

Belongs to the FPG family. As to quaternary structure, monomer. The cofactor is Zn(2+).

The catalysed reaction is Hydrolysis of DNA containing ring-opened 7-methylguanine residues, releasing 2,6-diamino-4-hydroxy-5-(N-methyl)formamidopyrimidine.. It carries out the reaction 2'-deoxyribonucleotide-(2'-deoxyribose 5'-phosphate)-2'-deoxyribonucleotide-DNA = a 3'-end 2'-deoxyribonucleotide-(2,3-dehydro-2,3-deoxyribose 5'-phosphate)-DNA + a 5'-end 5'-phospho-2'-deoxyribonucleoside-DNA + H(+). Its function is as follows. Involved in base excision repair of DNA damaged by oxidation or by mutagenic agents. Acts as a DNA glycosylase that recognizes and removes damaged bases. Has a preference for oxidized purines, such as 7,8-dihydro-8-oxoguanine (8-oxoG). Has AP (apurinic/apyrimidinic) lyase activity and introduces nicks in the DNA strand. Cleaves the DNA backbone by beta-delta elimination to generate a single-strand break at the site of the removed base with both 3'- and 5'-phosphates. This Alkalilimnicola ehrlichii (strain ATCC BAA-1101 / DSM 17681 / MLHE-1) protein is Formamidopyrimidine-DNA glycosylase.